The following is a 29-amino-acid chain: GLWETIKNFGKKFTLNILHKLKCKIGGGC.

A disulfide bridge connects residues C23 and C29.

It belongs to the frog skin active peptide (FSAP) family. Brevinin subfamily. Expressed by the skin glands.

Its subcellular location is the secreted. Antibacterial activity against representative Gram-negative and Gram-positive bacteria. This chain is Brevinin-2Tc, found in Rana temporaria (European common frog).